The primary structure comprises 79 residues: MSNKGQLLQGPFLNALRKEHVPVSIYLVNGIKLQGNIESFDQYVVLLRNTVTQMVYKHAISTVVPARAVNFRVDDAAEA.

The Sm domain occupies 10 to 69 (GPFLNALRKEHVPVSIYLVNGIKLQGNIESFDQYVVLLRNTVTQMVYKHAISTVVPARAV).

Belongs to the Hfq family. Homohexamer.

RNA chaperone that binds small regulatory RNA (sRNAs) and mRNAs to facilitate mRNA translational regulation in response to envelope stress, environmental stress and changes in metabolite concentrations. Also binds with high specificity to tRNAs. This chain is RNA-binding protein Hfq, found in Cupriavidus necator (strain ATCC 17699 / DSM 428 / KCTC 22496 / NCIMB 10442 / H16 / Stanier 337) (Ralstonia eutropha).